A 542-amino-acid chain; its full sequence is Chaperonin GroEL 3 (542 aa).

ATP-binding positions include 30–33 (TLGP), K51, 87–91 (DGTTT), G415, and D496.

It belongs to the chaperonin (HSP60) family. In terms of assembly, forms a cylinder of 14 subunits composed of two heptameric rings stacked back-to-back. Interacts with the co-chaperonin GroES.

Its subcellular location is the cytoplasm. The enzyme catalyses ATP + H2O + a folded polypeptide = ADP + phosphate + an unfolded polypeptide.. Together with its co-chaperonin GroES, plays an essential role in assisting protein folding. The GroEL-GroES system forms a nano-cage that allows encapsulation of the non-native substrate proteins and provides a physical environment optimized to promote and accelerate protein folding. The sequence is that of Chaperonin GroEL 3 from Rhizobium johnstonii (strain DSM 114642 / LMG 32736 / 3841) (Rhizobium leguminosarum bv. viciae).